The following is a 597-amino-acid chain: Aspartate--tRNA(Asp/Asn) ligase (597 aa).

Position 176 (Glu-176) interacts with L-aspartate. Positions 200–203 (QQFK) are aspartate. The L-aspartate site is built by Arg-222 and His-451. 222 to 224 (RDE) serves as a coordination point for ATP. Glu-489 contacts ATP. Position 496 (Arg-496) interacts with L-aspartate. 541–544 (GIDR) serves as a coordination point for ATP.

It belongs to the class-II aminoacyl-tRNA synthetase family. Type 1 subfamily. Homodimer.

It localises to the cytoplasm. It catalyses the reaction tRNA(Asx) + L-aspartate + ATP = L-aspartyl-tRNA(Asx) + AMP + diphosphate. Functionally, aspartyl-tRNA synthetase with relaxed tRNA specificity since it is able to aspartylate not only its cognate tRNA(Asp) but also tRNA(Asn). Reaction proceeds in two steps: L-aspartate is first activated by ATP to form Asp-AMP and then transferred to the acceptor end of tRNA(Asp/Asn). This is Aspartate--tRNA(Asp/Asn) ligase from Orientia tsutsugamushi (strain Boryong) (Rickettsia tsutsugamushi).